The following is a 217-amino-acid chain: Redox-sensing transcriptional repressor Rex (217 aa).

A DNA-binding region (H-T-H motif) is located at residues 17–56 (RYLRYVEDLLNHDVLRISSSELSQRMGYTASQVRQDFNNF). 91–96 (GVGNLG) contacts NAD(+).

Belongs to the transcriptional regulatory Rex family. Homodimer.

The protein resides in the cytoplasm. Modulates transcription in response to changes in cellular NADH/NAD(+) redox state. This chain is Redox-sensing transcriptional repressor Rex, found in Caldicellulosiruptor bescii (strain ATCC BAA-1888 / DSM 6725 / KCTC 15123 / Z-1320) (Anaerocellum thermophilum).